A 498-amino-acid chain; its full sequence is Na(+)/H(+) exchange regulatory cofactor NHE-RF4 (498 aa).

PDZ domains lie at 49 to 130 (FCLL…LAQH), 157 to 235 (LCHV…AGLE), 263 to 346 (CLNI…VDPE), and 394 to 475 (QCFL…GARN). A Phosphoserine modification is found at Ser329.

Interacts with the C-terminal region of GUCY2C. Interacts with C-terminal region of SLC9A3 and the interactions decrease in response to elevated calcium ion levels. Interacts with the C-terminal region of SLC34A1. Interacts with USP2 isoform 2. Interacts (via the third PDZ domain) with SLC26A3 (via PDZ-binding motif). This interaction leads to decreased expression of SLC26A3 on the cell membrane resulting in its reduced exchanger activity. Post-translationally, phosphorylation at Ser-329 negatively regulates its interaction with SLC26A3. As to expression, expressed in kidney and small intestine. Not detected in heart, brain, spleen, lung, liver, skeletal muscle or testis.

It is found in the cell membrane. The protein resides in the cytoplasm. In terms of biological role, acts as a regulatory protein that associates with GUCY2C and negatively modulates its heat-stable enterotoxin-mediated activation. Stimulates SLC9A3 activity in the presence of elevated calcium ions. The polypeptide is Na(+)/H(+) exchange regulatory cofactor NHE-RF4 (Nherf4) (Mus musculus (Mouse)).